We begin with the raw amino-acid sequence, 332 residues long: 2,3-diketo-L-gulonate reductase (332 aa).

Residue His-44 is the Proton donor of the active site. NAD(+)-binding positions include 168–174, 224–225, and 304–306; these read ITMVDMS, WK, and GHE.

It belongs to the LDH2/MDH2 oxidoreductase family. DlgD subfamily. In terms of assembly, homodimer.

The protein resides in the cytoplasm. It catalyses the reaction 3-dehydro-L-gulonate + NAD(+) = 2,3-dioxo-L-gulonate + NADH + H(+). The catalysed reaction is 3-dehydro-L-gulonate + NADP(+) = 2,3-dioxo-L-gulonate + NADPH + H(+). Functionally, catalyzes the reduction of 2,3-diketo-L-gulonate in the presence of NADH, to form 3-keto-L-gulonate. The chain is 2,3-diketo-L-gulonate reductase from Mannheimia succiniciproducens (strain KCTC 0769BP / MBEL55E).